The primary structure comprises 177 residues: Small ribosomal subunit protein uS13 (177 aa).

The segment covering 132-145 (GVRHKRGQKVRGQR) has biased composition (basic residues). The tract at residues 132 to 177 (GVRHKRGQKVRGQRTKSTGRTEGTIGVNVEAIKEEQAEDAAAEDDE) is disordered. A compositionally biased stretch (acidic residues) spans 167-177 (QAEDAAAEDDE).

Belongs to the universal ribosomal protein uS13 family. Part of the 30S ribosomal subunit. Forms a loose heterodimer with protein S19. Forms two bridges to the 50S subunit in the 70S ribosome.

Its function is as follows. Located at the top of the head of the 30S subunit, it contacts several helices of the 16S rRNA. In the 70S ribosome it contacts the 23S rRNA (bridge B1a) and protein L5 of the 50S subunit (bridge B1b), connecting the 2 subunits; these bridges are implicated in subunit movement. In Haloarcula marismortui (strain ATCC 43049 / DSM 3752 / JCM 8966 / VKM B-1809) (Halobacterium marismortui), this protein is Small ribosomal subunit protein uS13.